A 119-amino-acid chain; its full sequence is Holo-[acyl-carrier-protein] synthase (119 aa).

Mg(2+) is bound by residues aspartate 8 and glutamate 58.

It belongs to the P-Pant transferase superfamily. AcpS family. The cofactor is Mg(2+).

It localises to the cytoplasm. It catalyses the reaction apo-[ACP] + CoA = holo-[ACP] + adenosine 3',5'-bisphosphate + H(+). Functionally, transfers the 4'-phosphopantetheine moiety from coenzyme A to a Ser of acyl-carrier-protein. The protein is Holo-[acyl-carrier-protein] synthase of Halalkalibacterium halodurans (strain ATCC BAA-125 / DSM 18197 / FERM 7344 / JCM 9153 / C-125) (Bacillus halodurans).